A 95-amino-acid chain; its full sequence is Sec-independent protein translocase protein TatA (95 aa).

A helical membrane pass occupies residues 1-21; it reads MGSMSVWHWVIVAVVVMLLFG. The disordered stretch occupies residues 42–95; that stretch reads GMADDETQPNTATSVPPVGPNDPVRTLPHQGAPGTAPQPPHVQPHVSAGDHKAV.

This sequence belongs to the TatA/E family. As to quaternary structure, the Tat system comprises two distinct complexes: a TatABC complex, containing multiple copies of TatA, TatB and TatC subunits, and a separate TatA complex, containing only TatA subunits. Substrates initially bind to the TatABC complex, which probably triggers association of the separate TatA complex to form the active translocon.

The protein resides in the cell inner membrane. Part of the twin-arginine translocation (Tat) system that transports large folded proteins containing a characteristic twin-arginine motif in their signal peptide across membranes. TatA could form the protein-conducting channel of the Tat system. This chain is Sec-independent protein translocase protein TatA, found in Methylorubrum extorquens (strain CM4 / NCIMB 13688) (Methylobacterium extorquens).